The following is a 563-amino-acid chain: Beta-catenin-like protein 1 (563 aa).

M1 is subject to N-acetylmethionine. A disordered region spans residues 1-81 (MDVGELLSYQ…EEEEPLDESS (81 aa)). A Nuclear localization signal motif is present at residues 16-33 (KRPRDDEEEELKTRRKQT). The segment covering 34-45 (GPRERGRYREDE) has biased composition (basic and acidic residues). The segment covering 66-78 (DGEEEEEEEEPLD) has biased composition (acidic residues). 2 HEAT repeats span residues 79–129 (ESSV…VVAT) and 134–176 (YHLL…TLHE). The residue at position 91 (K91) is an N6-acetyllysine. The Nuclear export signal (NES) motif lies at 130-140 (MPDLYHLLVEL). 5 ARM repeats span residues 178–228 (EEGA…MAEF), 229–273 (RPEM…LQDN), 274–323 (DENR…CLML), 325–363 (SNRE…AMIG), and 364–417 (PEGA…LLRN). Residue S389 is modified to Phosphoserine. A coiled-coil region spans residues 476–540 (DMEDEFYLRR…HIIKEYAENI (65 aa)). Phosphoserine is present on S545.

As to quaternary structure, component of the PRP19-CDC5L splicing complex composed of a core complex comprising a homotetramer of PRPF19, CDC5L, PLRG1 and BCAS2, and at least three less stably associated proteins CTNNBL1, CWC15 and HSPA8. Interacts directly with CWC15 and CDC5L in the complex. Interacts with AICDA; the interaction is important for the antibody diversification activity of AICDA. Interacts with PRPF31 (via its NLS). Interacts (via its N-terminal NLS) with KPNA1 and KPNA2.

The protein resides in the nucleus. Component of the PRP19-CDC5L complex that forms an integral part of the spliceosome and is required for activating pre-mRNA splicing. Participates in AID/AICDA-mediated somatic hypermutation (SHM) and class-switch recombination (CSR), 2 processes resulting in the production of high-affinity, mutated isotype-switched antibodies. The protein is Beta-catenin-like protein 1 (Ctnnbl1) of Rattus norvegicus (Rat).